The chain runs to 232 residues: 2,3,4,5-tetrahydropyridine-2,6-dicarboxylate N-acetyltransferase (232 aa).

The protein belongs to the transferase hexapeptide repeat family. DapH subfamily.

The catalysed reaction is (S)-2,3,4,5-tetrahydrodipicolinate + acetyl-CoA + H2O = L-2-acetamido-6-oxoheptanedioate + CoA. It participates in amino-acid biosynthesis; L-lysine biosynthesis via DAP pathway; LL-2,6-diaminopimelate from (S)-tetrahydrodipicolinate (acetylase route): step 1/3. Functionally, catalyzes the transfer of an acetyl group from acetyl-CoA to tetrahydrodipicolinate. This chain is 2,3,4,5-tetrahydropyridine-2,6-dicarboxylate N-acetyltransferase, found in Streptococcus pneumoniae serotype 2 (strain D39 / NCTC 7466).